We begin with the raw amino-acid sequence, 657 residues long: Threonine--tRNA ligase (657 aa).

One can recognise a TGS domain in the interval 7–70; it reads DRQQVIITLP…TENARVSIIT (64 aa). A catalytic region spans residues 253–555; it reads DHRKLGAELG…LIEHTAGNFP (303 aa). 3 residues coordinate Zn(2+): cysteine 351, histidine 402, and histidine 532.

The protein belongs to the class-II aminoacyl-tRNA synthetase family. In terms of assembly, homodimer. Zn(2+) serves as cofactor.

It is found in the cytoplasm. The enzyme catalyses tRNA(Thr) + L-threonine + ATP = L-threonyl-tRNA(Thr) + AMP + diphosphate + H(+). Catalyzes the attachment of threonine to tRNA(Thr) in a two-step reaction: L-threonine is first activated by ATP to form Thr-AMP and then transferred to the acceptor end of tRNA(Thr). Also edits incorrectly charged L-seryl-tRNA(Thr). This is Threonine--tRNA ligase from Chlorobaculum tepidum (strain ATCC 49652 / DSM 12025 / NBRC 103806 / TLS) (Chlorobium tepidum).